A 133-amino-acid polypeptide reads, in one-letter code: UPF0146 protein MTH_1000 (133 aa).

The protein belongs to the UPF0146 family.

The sequence is that of UPF0146 protein MTH_1000 from Methanothermobacter thermautotrophicus (strain ATCC 29096 / DSM 1053 / JCM 10044 / NBRC 100330 / Delta H) (Methanobacterium thermoautotrophicum).